The following is a 160-amino-acid chain: Ribosomal RNA large subunit methyltransferase H (160 aa).

Residues Leu76 and Gly108 each contribute to the S-adenosyl-L-methionine site.

It belongs to the RNA methyltransferase RlmH family. As to quaternary structure, homodimer.

It is found in the cytoplasm. The enzyme catalyses pseudouridine(1915) in 23S rRNA + S-adenosyl-L-methionine = N(3)-methylpseudouridine(1915) in 23S rRNA + S-adenosyl-L-homocysteine + H(+). In terms of biological role, specifically methylates the pseudouridine at position 1915 (m3Psi1915) in 23S rRNA. The chain is Ribosomal RNA large subunit methyltransferase H from Xanthobacter autotrophicus (strain ATCC BAA-1158 / Py2).